Reading from the N-terminus, the 525-residue chain is GMP synthase [glutamine-hydrolyzing] (525 aa).

In terms of domain architecture, Glutamine amidotransferase type-1 spans 9 to 207 (RILILDFGSQ…VLDICGCDAL (199 aa)). Cysteine 86 acts as the Nucleophile in catalysis. Catalysis depends on residues histidine 181 and glutamate 183. Residues 208 to 400 (WTSAAIIEDT…LGLPYDMLYR (193 aa)) form the GMPS ATP-PPase domain. Position 235–241 (235–241 (SGGVDSS)) interacts with ATP.

Homodimer.

It carries out the reaction XMP + L-glutamine + ATP + H2O = GMP + L-glutamate + AMP + diphosphate + 2 H(+). The protein operates within purine metabolism; GMP biosynthesis; GMP from XMP (L-Gln route): step 1/1. Catalyzes the synthesis of GMP from XMP. The protein is GMP synthase [glutamine-hydrolyzing] of Proteus mirabilis (strain HI4320).